Reading from the N-terminus, the 512-residue chain is Maturase K (512 aa).

This sequence belongs to the intron maturase 2 family. MatK subfamily.

It localises to the plastid. It is found in the chloroplast. Usually encoded in the trnK tRNA gene intron. Probably assists in splicing its own and other chloroplast group II introns. This chain is Maturase K, found in Koelreuteria paniculata (Goldenrain tree).